The chain runs to 427 residues: Adenylosuccinate synthetase (427 aa).

Residues G12–K18 and G40–T42 each bind GTP. D13 acts as the Proton acceptor in catalysis. Mg(2+) contacts are provided by D13 and G40. IMP is bound by residues D13–K16, N38–H41, T128, R142, Q223, T238, and R302. H41 serves as the catalytic Proton donor. A substrate-binding site is contributed by T298 to R304. Residues R304, K330 to D332, and S412 to G414 each bind GTP.

This sequence belongs to the adenylosuccinate synthetase family. Homodimer. Requires Mg(2+) as cofactor.

It is found in the cytoplasm. The catalysed reaction is IMP + L-aspartate + GTP = N(6)-(1,2-dicarboxyethyl)-AMP + GDP + phosphate + 2 H(+). It participates in purine metabolism; AMP biosynthesis via de novo pathway; AMP from IMP: step 1/2. Functionally, plays an important role in the de novo pathway of purine nucleotide biosynthesis. Catalyzes the first committed step in the biosynthesis of AMP from IMP. This is Adenylosuccinate synthetase from Carboxydothermus hydrogenoformans (strain ATCC BAA-161 / DSM 6008 / Z-2901).